The chain runs to 131 residues: MGVGTKVLVITTMAICLISSAAYASEGTATFYTPPYVPSACNGYKNDGVMIAAASYAIWNNGAVCNKSFRVKCTGATNQGTPHPCRGGSVLVKIVDLCPAGCQATIDLSQEAFSQIANPDAGKIKIEFNQA.

The signal sequence occupies residues 1–24; sequence MGVGTKVLVITTMAICLISSAAYA. The Expansin-like EG45; incomplete domain occupies 27–131; the sequence is GTATFYTPPY…GKIKIEFNQA (105 aa). Residues Cys73 and Cys85 are joined by a disulfide bond.

In terms of tissue distribution, expressed in the outer layer of xylem and the vascular cambial zone of roots, in shoot cambium, but not in leaves.

The protein resides in the secreted. In terms of biological role, might have a systemic role in water and solute homeostasis. Has no expansin-like activity. The sequence is that of EG45-like domain containing protein (CjBAp12) from Citrus jambhiri (Rough lemon).